The following is a 134-amino-acid chain: Small ribosomal subunit protein bS16 (134 aa).

The tract at residues 79–134 (AGIAKRPSRNNPTKGEPGKKAQERLALAKQAEEEASAKAAEAAAAAAAPAEEAASE) is disordered. Residues 115-134 (AKAAEAAAAAAAPAEEAASE) are compositionally biased toward low complexity.

Belongs to the bacterial ribosomal protein bS16 family.

The protein is Small ribosomal subunit protein bS16 of Brucella abortus (strain S19).